A 270-amino-acid polypeptide reads, in one-letter code: Formamidopyrimidine-DNA glycosylase (270 aa).

P2 functions as the Schiff-base intermediate with DNA in the catalytic mechanism. The Proton donor role is filled by E3. K58 acts as the Proton donor; for beta-elimination activity in catalysis. DNA contacts are provided by H91, R110, and R151. The FPG-type zinc-finger motif lies at 236 to 270 (FVYGRGGQPCKVCGTALREVKLGQRASVYCPRCQR). R260 serves as the catalytic Proton donor; for delta-elimination activity.

It belongs to the FPG family. In terms of assembly, monomer. It depends on Zn(2+) as a cofactor.

It carries out the reaction Hydrolysis of DNA containing ring-opened 7-methylguanine residues, releasing 2,6-diamino-4-hydroxy-5-(N-methyl)formamidopyrimidine.. The catalysed reaction is 2'-deoxyribonucleotide-(2'-deoxyribose 5'-phosphate)-2'-deoxyribonucleotide-DNA = a 3'-end 2'-deoxyribonucleotide-(2,3-dehydro-2,3-deoxyribose 5'-phosphate)-DNA + a 5'-end 5'-phospho-2'-deoxyribonucleoside-DNA + H(+). Functionally, involved in base excision repair of DNA damaged by oxidation or by mutagenic agents. Acts as a DNA glycosylase that recognizes and removes damaged bases. Has a preference for oxidized purines, such as 7,8-dihydro-8-oxoguanine (8-oxoG). Has AP (apurinic/apyrimidinic) lyase activity and introduces nicks in the DNA strand. Cleaves the DNA backbone by beta-delta elimination to generate a single-strand break at the site of the removed base with both 3'- and 5'-phosphates. The polypeptide is Formamidopyrimidine-DNA glycosylase (Pseudomonas putida (strain GB-1)).